Reading from the N-terminus, the 93-residue chain is MVTPREPKKRTTRKKKDPNAPKRALSAYMFFANENRDIVRSENPDITFGQVGKKLGEKWKALTPEEKQPYEAKAQADKKRYESEKELYNATLA.

2 disordered regions span residues 1–23 (MVTPREPKKRTTRKKKDPNAPKR) and 69–93 (PYEAKAQADKKRYESEKELYNATLA). A compositionally biased stretch (basic residues) spans 7–16 (PKKRTTRKKK). Positions 21-89 (PKRALSAYMF…RYESEKELYN (69 aa)) form a DNA-binding region, HMG box. Residues 69–87 (PYEAKAQADKKRYESEKEL) are compositionally biased toward basic and acidic residues.

Belongs to the NHP6 family. In terms of assembly, weakly associates with the stable SPT16-POB3 heterodimer to form the FACT (yFACT or SNP) complex, which is associated with nucleosomes. Multiple molecules of NHP6 (NHP6A and/or NHP6B) are required to recruit the SPT16-POB3 heterodimer to DNA.

It localises to the nucleus. The protein resides in the chromosome. Its function is as follows. DNA-binding protein that induces severe bending of DNA. Required for DNA-binding by the FACT complex, a general chromatin factor that acts to reorganize nucleosomes. The FACT complex is involved in multiple processes that require DNA as a template such as mRNA elongation, DNA replication and DNA repair. Also augments the fidelity of transcription by RNA polymerase III independently of any role in the FACT complex. Required for transcriptional initiation fidelity of some but not all tRNA genes. Seems to be functionally redundant with NHP6B. This is Non-histone chromosomal protein 6A (NHP6A) from Saccharomyces cerevisiae (strain ATCC 204508 / S288c) (Baker's yeast).